The sequence spans 56 residues: Ovomucoid (56 aa).

One can recognise a Kazal-like domain in the interval 6-56; it reads VDCSEYPKPACTLEYRPLCGSDNKTYANKCNFCNAVVESNGTLTLSHFGKC. 3 cysteine pairs are disulfide-bonded: Cys8/Cys38, Cys16/Cys35, and Cys24/Cys56. Asn45 is a glycosylation site (N-linked (GlcNAc...) asparagine).

The protein resides in the secreted. The polypeptide is Ovomucoid (Callipepla californica (California quail)).